The primary structure comprises 1596 residues: Cellulose synthase 2 (1596 aa).

Residues 1–749 are catalytic; the sequence is MIYRAILKRL…RSARHGATAS (749 aa). A run of 2 helical transmembrane segments spans residues 25–45 and 106–126; these read SPFV…GVTI and LSLL…LSYF. The segment at 145–238 is catalytic subdomain A; that stretch reads DWPVVDVYVP…YVVIFDCDHI (94 aa). Asp-187 is an active-site residue. Substrate contacts are provided by Asp-234 and Asp-236. Residues 315–375 form a catalytic subdomain B region; sequence SAVLGIGGFA…GQRVRWARGM (61 aa). Asp-331 is a catalytic residue. 4 helical membrane-spanning segments follow: residues 396 to 416, 421 to 441, 505 to 525, and 544 to 564; these read LCYL…VFLA, FLFL…VYAF, FDLN…LALV, and FALN…SIAV. The region spanning 570 to 669 is the PilZ domain; that stretch reads QIRHKPRVRA…ERQIVEFMFG (100 aa). Residues 750-1596 form a cyclic di-GMP binding domain region; the sequence is LIVLLGLPAA…RVKDTTDASH (847 aa). Disordered regions lie at residues 769–812 and 828–868; these read SRAT…IAPA and TGPA…APPI. Positions 783 to 809 are enriched in pro residues; the sequence is VEPPPVNAPPPPSLPQPPGTLPTPPQI. Residues 1553–1573 traverse the membrane as a helical segment; it reads LTLYVLGLVGAGLVAAAAVRL.

It in the N-terminal section; belongs to the glycosyltransferase 2 family. This sequence in the C-terminal section; belongs to the AcsB/BcsB family.

It is found in the cell inner membrane. The enzyme catalyses [(1-&gt;4)-beta-D-glucosyl](n) + UDP-alpha-D-glucose = [(1-&gt;4)-beta-D-glucosyl](n+1) + UDP + H(+). This chain is Cellulose synthase 2 (acsAII), found in Novacetimonas hansenii (Komagataeibacter hansenii).